We begin with the raw amino-acid sequence, 452 residues long: GTPase Obg (452 aa).

Residues 1-158 form the Obg domain; it reads MFIDRAKIYV…KWIVLELKVM (158 aa). 2 disordered regions span residues 66-87 and 117-143; these read GKRG…DKVI and AEGG…SEDG. In terms of domain architecture, OBG-type G spans 159 to 338; the sequence is AEVGLIGYPN…LLDFVAEKVA (180 aa). GTP is bound by residues 165-172, 190-194, 212-215, 282-285, and 319-321; these read GYPNVGKS, FTTLN, DIPG, NKMD, and SAA. Mg(2+) is bound by residues serine 172 and threonine 192. An OCT domain is found at 376–452; that stretch reads IEEKPKSDFG…KIGNVEFEYQ (77 aa).

Belongs to the TRAFAC class OBG-HflX-like GTPase superfamily. OBG GTPase family. In terms of assembly, monomer. Requires Mg(2+) as cofactor.

The protein resides in the cytoplasm. An essential GTPase which binds GTP, GDP and possibly (p)ppGpp with moderate affinity, with high nucleotide exchange rates and a fairly low GTP hydrolysis rate. Plays a role in control of the cell cycle, stress response, ribosome biogenesis and in those bacteria that undergo differentiation, in morphogenesis control. The chain is GTPase Obg from Natranaerobius thermophilus (strain ATCC BAA-1301 / DSM 18059 / JW/NM-WN-LF).